The chain runs to 362 residues: MRRPMIASLLLDTLPLAQMPKVTTALLIGALVIFAGIVVVLFIFTSYFGLWIQSVLTGSKISFGNLIGMTFRKVNTRAIVRSKIMATQAGLDDPELTVGALEAHYLAGGNVQQVIRALIAAKKAKTISLTFREATAIDLAGRDVLESVQTSVYPKVIDCPPRGSAKPSLDAVAKDGIQLKVRARVTVRANLQQLIGGATEETIIARVGEGIVSAIGSADDHKAVLENPDVISKAVLVKKLDSQTAFEIVSIDIADIDVGANIGARLQADQAEADTAVARANAEGRRAAAVAEEQEMQAEIAKSQAQVVEAQSDVPRAMAEAFRSGKLLVMDYYRLQNVSADTEMRRALAGHSHDPDTPEETH.

The helical transmembrane segment at 24 to 44 (TALLIGALVIFAGIVVVLFIF) threads the bilayer.

This sequence belongs to the flotillin-like FloA family. Homooligomerizes.

It localises to the cell membrane. The protein localises to the membrane raft. Found in functional membrane microdomains (FMM) that may be equivalent to eukaryotic membrane rafts. FMMs are highly dynamic and increase in number as cells age. Flotillins are thought to be important factors in membrane fluidity. This is Flotillin-like protein FloA 2 from Rhodopirellula baltica (strain DSM 10527 / NCIMB 13988 / SH1).